The following is a 1393-amino-acid chain: MNQEVMNLFNPTTPAPTFDQIKISIASPEKISSWSYGEIKKPETINYRTFKPERDGLFCARIFGPIKDYECLCGKYKRMKYKGIICEKCGVEVTLSRVRRERMGHIELAAPVAHIWFLKSLPSRIGLLLDMTLKDLERILYFEYFVVTEPGLTPLKYRQLLSEDDYLRAQDEYGEDSFTAMIGAEAIRELLRSMDLEKLAADIRVEIANSTTELKPKKLAKRLKIVEAFQASGNKPEWMILTHVPVIPPDLRPLVPLDGGRFATSDLNDLYRRVINRNNRLKRLIELRAPDIIIRNEKRMLQEAVDALFDNGRRGRVITGANKRPLKSLADMLKGKQGRFRQNLLGKRVDYSGRSVIVVGPELKLHQCGLPKKMALELFKPFIYARLDAKGHSATVKQAKKLVEKERPEVWDILDEVIREHPVMLNRAPTLHRLGIQAFEPVLIEGKAIQLHPLVCSAFNADFDGDQMAVHVPLSLEAQLEARVLMMSTNNILHPANGAPIIVPSQDIVLGLYYLSLMREKEPGEGMMFADMGEIDHAIAAKAITLHTKIRGRYIGVDADGKRYSKIYETTPGRMKIGELLPKHHKVPFDVVNKLMTKKEISNMIDTVYRHCGQKESVIFCDRLMSLGFYNAFRAGISFGKDDMVVPAKKWQLVEETRTLTKEYEQQYNDGLITQGEKYNKVVDAWGKCTDRIADEMMKEISAVKKDPETGREKQINSIYMMSHSGARGSPAQMKQLAGMRGLMAKPSGEIIESPIISNFKEGLTVMEYFNSTHGARKGLADTALKTANSGYLTRRLVDVAQDSIINERDCGSNNGIHMRAIIDSGQVVASLASRVLGRTAVEDVVEPATGDIIVPKGTMIEEHHIERINKSGIQEIKIRSVLTCETRNGVCGTCYGRDLARGTPVNMGEAVGVIAAQSIGEPGTQLTMRTFHIGGAAQLADSSFVETNFEGTVRVRNRNVARNSEGDLVVMARNLAIVVVDHDGTERAVHRIQYGSRLKVDEGDTVKRGQRIAEWDPYTRPILTEVDGTVGFEDLVEGQSMSEAVDEATGIAKRVVTDSRSVRGADLRPAIVLKGKDGKVSKLPRGGDARYTLPVEAIISVDPGQTIKAGDVVARVPMESAKTRDITGGLPRVAELFEARRPKDAAIIAEISGTVRFGRDYKNKRRLTIEPTEGGDAVEYLIPKGKHIHLQDGDVVEKGDFLVDGNPAPHDILAIKGVEELAAFLVNEIQEVYRLQGVNINDKHIEVIVRNMLQKVELDDAGDTEFLDGEQVDRIELAEANERMKEQGLKPATGHPVLLGITKASLQTRSFFSAASFQETTRVLTEAAVNGKVDPLDGLKENVIVGRLIPAGTGAQMNKLRVTANSRDDLILATRGESEEPSMVEGSADAAE.

Positions 71, 73, 86, and 89 each coordinate Zn(2+). Mg(2+) contacts are provided by aspartate 462, aspartate 464, and aspartate 466. 4 residues coordinate Zn(2+): cysteine 811, cysteine 885, cysteine 892, and cysteine 895.

The protein belongs to the RNA polymerase beta' chain family. As to quaternary structure, the RNAP catalytic core consists of 2 alpha, 1 beta, 1 beta' and 1 omega subunit. When a sigma factor is associated with the core the holoenzyme is formed, which can initiate transcription. It depends on Mg(2+) as a cofactor. Zn(2+) is required as a cofactor.

The enzyme catalyses RNA(n) + a ribonucleoside 5'-triphosphate = RNA(n+1) + diphosphate. In terms of biological role, DNA-dependent RNA polymerase catalyzes the transcription of DNA into RNA using the four ribonucleoside triphosphates as substrates. The polypeptide is DNA-directed RNA polymerase subunit beta' (Azorhizobium caulinodans (strain ATCC 43989 / DSM 5975 / JCM 20966 / LMG 6465 / NBRC 14845 / NCIMB 13405 / ORS 571)).